The chain runs to 551 residues: Glucans biosynthesis protein D (551 aa).

The tat-type signal signal peptide spans 1-32 (MNRRRFIKGSMAMAAVCGSSGIASLFSQAAFA).

The protein belongs to the OpgD/OpgG family. Post-translationally, predicted to be exported by the Tat system. The position of the signal peptide cleavage has not been experimentally proven.

The protein localises to the periplasm. It functions in the pathway glycan metabolism; osmoregulated periplasmic glucan (OPG) biosynthesis. Functionally, probably involved in the control of the structural glucose backbone of osmoregulated periplasmic glucans (OPGs). This is Glucans biosynthesis protein D (mdoD) from Salmonella typhimurium (strain LT2 / SGSC1412 / ATCC 700720).